Reading from the N-terminus, the 129-residue chain is Small ribosomal subunit protein uS11 (129 aa).

The protein belongs to the universal ribosomal protein uS11 family. As to quaternary structure, part of the 30S ribosomal subunit. Interacts with proteins S7 and S18. Binds to IF-3.

Functionally, located on the platform of the 30S subunit, it bridges several disparate RNA helices of the 16S rRNA. Forms part of the Shine-Dalgarno cleft in the 70S ribosome. The chain is Small ribosomal subunit protein uS11 from Beijerinckia indica subsp. indica (strain ATCC 9039 / DSM 1715 / NCIMB 8712).